The chain runs to 409 residues: LIM/homeobox protein ttx-3 (409 aa).

LIM zinc-binding domains are found at residues 108-169 (NQCC…RYQK) and 171-232 (CRKC…VRST). 2 disordered regions span residues 245-299 (AVVA…RTSF) and 372-409 (MNPP…YTHL). Pro residues predominate over residues 247 to 267 (VAPPPPPPTTTTAPPPAAPEQ). Residues 292-351 (SKRMRTSFKHHQLRAMKTYFALNHNPDAKDLKQLAAKTNLTKRVLQVWFQNARAKYRREL) constitute a DNA-binding region (homeobox). Polar residues predominate over residues 382–409 (GHSTDGYQLNTPPLSSEIYSPNSNYTHL).

Expressed in the AIA, AIN and AIY interneurons, and in the NSM neurons. Expressed also in ADL and ASI sensory neurons in 60-70% of L2 larvae. Expression is also detected in head muscles of embryos and some early larvae but not late larvae or adults.

Its subcellular location is the nucleus. It is found in the perikaryon. It localises to the cell projection. The protein resides in the axon. Transcription factor. Binds to a sequence motif, 5'-TTATTGGCTTCGTTAA-3', which may be involved in AIY interneuron function, in the regulatory elements of target genes; binding is more efficient, in vitro, together with homeobox protein ceh-10. Required for specification of the AIA and AIY interneurons and the NSM neurons. Positively regulates the expression of a number of genes including ceh-10, ceh-23, kal-1, hen-1, ser-2, unc-17 and sra-11 in AIY neurons, and cat-4, flp-4, bas-1, ptps-1 and mgl-1 in NSM neurons. In concert with WNT/beta-catenin signaling, initiates expression of homeobox ceh-10 in AIY, but not in the sister cells, SMDD motor neurons. Also acts in an autoregulatory feedback loop to maintain its own expression. Plays a role in the thermotactic response, olfactory imprinting, regulation of longevity, control of dauer formation and axon outgrowth and pathfinding. Not required for normal chemosensory behavior. The polypeptide is LIM/homeobox protein ttx-3 (Caenorhabditis elegans).